A 197-amino-acid polypeptide reads, in one-letter code: Recombination protein RecR (197 aa).

Residues Cys57–Cys72 form a C4-type zinc finger. One can recognise a Toprim domain in the interval Thr79–Pro174.

Belongs to the RecR family.

May play a role in DNA repair. It seems to be involved in an RecBC-independent recombinational process of DNA repair. It may act with RecF and RecO. The sequence is that of Recombination protein RecR from Geotalea daltonii (strain DSM 22248 / JCM 15807 / FRC-32) (Geobacter daltonii).